Consider the following 415-residue polypeptide: Serine hydroxymethyltransferase (415 aa).

Residues Leu-122 and 126-128 (GHL) contribute to the (6S)-5,6,7,8-tetrahydrofolate site. The residue at position 230 (Lys-230) is an N6-(pyridoxal phosphate)lysine.

The protein belongs to the SHMT family. In terms of assembly, homodimer. It depends on pyridoxal 5'-phosphate as a cofactor.

Its subcellular location is the cytoplasm. It catalyses the reaction (6R)-5,10-methylene-5,6,7,8-tetrahydrofolate + glycine + H2O = (6S)-5,6,7,8-tetrahydrofolate + L-serine. It participates in one-carbon metabolism; tetrahydrofolate interconversion. It functions in the pathway amino-acid biosynthesis; glycine biosynthesis; glycine from L-serine: step 1/1. Its function is as follows. Catalyzes the reversible interconversion of serine and glycine with tetrahydrofolate (THF) serving as the one-carbon carrier. This reaction serves as the major source of one-carbon groups required for the biosynthesis of purines, thymidylate, methionine, and other important biomolecules. Also exhibits THF-independent aldolase activity toward beta-hydroxyamino acids, producing glycine and aldehydes, via a retro-aldol mechanism. The chain is Serine hydroxymethyltransferase from Ralstonia pickettii (strain 12J).